Consider the following 404-residue polypeptide: Caspase b (404 aa).

A propeptide spanning residues Met-1–Gln-171 is cleaved from the precursor. The region spanning Leu-8–Ala-80 is the Pyrin domain. Residues His-249 and Cys-296 contribute to the active site. The propeptide occupies Ser-301 to Trp-316.

Belongs to the peptidase C14A family. Upon direct LPS-binding, forms large homooligomers, resulting in its activation. These oligomers are often referred to as 'non-canonical inflammasomes'. Heterotetramer that consists of two anti-parallel arranged heterodimers, each one formed by a 20 kDa (p20) and a 10 kDa (p10) subunit. Interacts with caspa. Interacts with pycard; the interaction only occurs in the presence of nlrp1. Component of NLRP1 inflammasomes. Inflammasomes are supramolecular complexes that assemble in the cytosol in response to pathogens and other damage-associated signals and play critical roles in innate immunity and inflammation. The NLRP1 inflammasome is composed of the signal sensor nlrp1, and the adapter pycard (asc), which recruit effector pro-inflammatory caspases caspa and/or caspb. The interaction between nlrp1 and pycard is required for the sequential recruitment of caspa and then caspb. Caspa is preferentially recruited first and this causes the cleavage of pro-il1b into the midformed il1b. This is followed by the recruitment of caspb, which is activated and cleaves the midformed il1b resulting in il1b maturation. In terms of processing, the two subunits are derived from the precursor sequence by an autocatalytic mechanism. Expressed in the spleen, kidney and liver, and highly expressed in the gills and gut.

The protein localises to the inflammasome. It is found in the cytoplasm. The catalysed reaction is Strict requirement for Asp at the P1 position. It has a preferred cleavage sequence of Tyr-Val-Ala-Asp-|- but also cleaves at Asp-Glu-Val-Asp-|-.. With respect to regulation, activated by homooligomerization induced by direct binding to cytosolic LPS. Thiol protease which cleaves IL-1 beta (il1b), releasing the mature cytokine which is involved in a variety of inflammatory processes, and mediates apoptosis. Component of the NLRP1 inflammasome, which plays a crucial role in innate immunity and inflammation. In response to pathogens and other damage-associated signals, recruited to the NLRP1 inflammasome in its precursor form following the recruitment of caspase caspa. Its subsequent activation causes the cleavage of the midformed pro-il1b and results in il1b maturation and secretion in the extracellular milieu. Activated by direct binding to bacterial lipopolysaccharides (LPS), which causes non-canonical inflammasome activation and results in the pyroptosis of infected cells and their extrusion into the gut lumen, as well as in cytokine secretion. Plays a crucial role in the restriction of bacterial infection to intestinal sites. Pyroptosis limits bacterial replication, while cytokine secretion promotes the recruitment and activation of immune cells and triggers mucosal inflammation. Promotes pyroptosis by bacterial infection by E.piscicida. In Danio rerio (Zebrafish), this protein is Caspase b.